We begin with the raw amino-acid sequence, 108 residues long: Putative pterin-4-alpha-carbinolamine dehydratase (108 aa).

This sequence belongs to the pterin-4-alpha-carbinolamine dehydratase family.

The catalysed reaction is (4aS,6R)-4a-hydroxy-L-erythro-5,6,7,8-tetrahydrobiopterin = (6R)-L-erythro-6,7-dihydrobiopterin + H2O. The protein is Putative pterin-4-alpha-carbinolamine dehydratase of Bordetella avium (strain 197N).